A 540-amino-acid polypeptide reads, in one-letter code: Chaperonin GroEL (540 aa).

Residues 30 to 33, lysine 51, 87 to 91, glycine 415, 479 to 481, and aspartate 495 each bind ATP; these read TLGP, DGTTT, and NAA.

It belongs to the chaperonin (HSP60) family. As to quaternary structure, forms a cylinder of 14 subunits composed of two heptameric rings stacked back-to-back. Interacts with the co-chaperonin GroES.

It is found in the cytoplasm. The enzyme catalyses ATP + H2O + a folded polypeptide = ADP + phosphate + an unfolded polypeptide.. Its function is as follows. Together with its co-chaperonin GroES, plays an essential role in assisting protein folding. The GroEL-GroES system forms a nano-cage that allows encapsulation of the non-native substrate proteins and provides a physical environment optimized to promote and accelerate protein folding. This is Chaperonin GroEL from Pluralibacter gergoviae (Enterobacter gergoviae).